The chain runs to 143 residues: Crossover junction endodeoxyribonuclease Hjc (143 aa).

Glu-11 lines the Mg(2+) pocket. Residue Ser-31 is part of the active site. The Mg(2+) site is built by Asp-41 and Glu-54.

This sequence belongs to the Holliday junction resolvase Hjc family. Homodimer. Mg(2+) is required as a cofactor.

The catalysed reaction is Endonucleolytic cleavage at a junction such as a reciprocal single-stranded crossover between two homologous DNA duplexes (Holliday junction).. A structure-specific endonuclease that resolves Holliday junction (HJ) intermediates during genetic recombination. Cleaves 4-way DNA junctions introducing paired nicks in opposing strands, leaving a 5'-terminal phosphate and a 3'-terminal hydroxyl group that are ligated to produce recombinant products. Functionally, redundant function with Holliday junction resolvase Hje. This is Crossover junction endodeoxyribonuclease Hjc from Sulfolobus acidocaldarius (strain ATCC 33909 / DSM 639 / JCM 8929 / NBRC 15157 / NCIMB 11770).